Consider the following 292-residue polypeptide: High-affinity heme uptake system protein IsdE (292 aa).

The N-terminal stretch at 1 to 19 (MRIIKYLTILVISVVILTS) is a signal peptide. Cys-20 carries N-palmitoyl cysteine lipidation. The S-diacylglycerol cysteine moiety is linked to residue Cys-20. Residues 35 to 291 (RIVPTTVALT…QLYDLFYKDK (257 aa)) enclose the Fe/B12 periplasmic-binding domain. Residues Val-41, Ala-42, Ser-60, Tyr-61, Met-78, and His-229 each coordinate heme.

The protein belongs to the bacterial solute-binding protein 8 family. The cofactor is heme b.

It localises to the cell membrane. Functionally, involved in heme (porphyrin) scavenging. Binds Fe(2+) and Fe(3+) heme but the largest fraction is Fe(2+) heme. Functions as a high-affinity heme binding protein and probably has a role in relaying heme-iron from cell wall-anchored isd proteins receptors to the probable permease IsdF. This Staphylococcus aureus (strain bovine RF122 / ET3-1) protein is High-affinity heme uptake system protein IsdE (isdE).